Here is a 1452-residue protein sequence, read N- to C-terminus: ABC multidrug transporter A (1452 aa).

The segment at 1 to 20 (MNESHEAGKNSSTNVEEREE) is disordered. Residues N2, N10, N228, N287, and N311 are each glycosylated (N-linked (GlcNAc...) asparagine). Residues 110–363 (LKTLSLARIA…FLQMGFVCPD (254 aa)) form the ABC transporter 1 domain. A run of 6 helical transmembrane segments spans residues 474–494 (VTIS…SIFY), 508–528 (ALLF…MLTL), 554–574 (MIMD…VLYF), 583–603 (GAFF…SMFF), 616–636 (VLPF…FAIP), and 725–745 (IGVI…ATDF). The ABC transporter 2 domain maps to 802-1044 (FQWKDVCFDI…ILIDYFVRNG (243 aa)). 838–845 (GVSGAGKT) provides a ligand contact to ATP. 5 consecutive transmembrane segments (helical) span residues 1153–1173 (ALCV…PNTI), 1183–1203 (IFML…HFVA), 1223–1243 (FLIA…VLMF), 1271–1291 (LMIW…IAAF), and 1297–1317 (AGNL…VLAT). N-linked (GlcNAc...) asparagine glycosylation is found at N1350, N1365, and N1391. Residues 1418–1438 (FGLMWVFIVFNIFAACSLYWW) traverse the membrane as a helical segment.

This sequence belongs to the ABC transporter superfamily. ABCG family. PDR (TC 3.A.1.205) subfamily.

Its subcellular location is the membrane. Its function is as follows. ABC transporter that seems not to be involved in the efflux of toxic substances, at least not the classical compounds such as itraconazole, amphotericin B, voriconazole, posaconazole, ravuconazole, or echinocandins. The polypeptide is ABC multidrug transporter A (Aspergillus fumigatus (Neosartorya fumigata)).